The primary structure comprises 175 residues: Alkyl hydroperoxide reductase AhpD (175 aa).

C130 serves as the catalytic Proton donor. C130 and C133 are oxidised to a cystine. C133 (cysteine sulfenic acid (-SOH) intermediate) is an active-site residue.

This sequence belongs to the AhpD family. Homotrimer.

The enzyme catalyses N(6)-[(R)-dihydrolipoyl]-L-lysyl-[lipoyl-carrier protein] + a hydroperoxide = N(6)-[(R)-lipoyl]-L-lysyl-[lipoyl-carrier protein] + an alcohol + H2O. Its function is as follows. Antioxidant protein with alkyl hydroperoxidase activity. Required for the reduction of the AhpC active site cysteine residues and for the regeneration of the AhpC enzyme activity. The polypeptide is Alkyl hydroperoxide reductase AhpD (Mycobacteroides abscessus (strain ATCC 19977 / DSM 44196 / CCUG 20993 / CIP 104536 / JCM 13569 / NCTC 13031 / TMC 1543 / L948) (Mycobacterium abscessus)).